The following is a 250-amino-acid chain: Oil body-associated protein 2B (250 aa).

The tract at residues 1–29 (MSSSDQNPAATPASSGPAEPSPPGRPTAV) is disordered. Low complexity predominate over residues 8–18 (PAATPASSGPA).

It belongs to the OBAP family.

In Zea mays (Maize), this protein is Oil body-associated protein 2B.